A 69-amino-acid polypeptide reads, in one-letter code: U2-agatoxin-Ao1o (69 aa).

An N-terminal signal peptide occupies residues 1-20 (MKAIISLLLISAMVFSMFEA). The propeptide occupies 21 to 34 (VPVRRRFTAFEGER). 3 cysteine pairs are disulfide-bonded: cysteine 36/cysteine 52, cysteine 43/cysteine 57, and cysteine 51/cysteine 67. Leucine 68 is subject to Leucine amide.

Belongs to the neurotoxin 01 (U2-agtx) family. Expressed by the venom gland.

The protein resides in the secreted. Its function is as follows. Insect active toxin causing rapid but reversible paralysis in crickets. No activity shown in mammals. Does not show effect on mammalian voltage-gated calcium channels. This chain is U2-agatoxin-Ao1o, found in Agelena orientalis (Funnel-web spider).